Here is a 321-residue protein sequence, read N- to C-terminus: F-box protein At4g35930 (321 aa).

Residues Met1–Thr13 show a composition bias toward basic and acidic residues. Residues Met1–Ser23 are disordered. One can recognise an F-box domain in the interval Glu159–Thr207. Positions Trp228–Arg258 are disordered.

The protein is F-box protein At4g35930 of Arabidopsis thaliana (Mouse-ear cress).